We begin with the raw amino-acid sequence, 337 residues long: Methylthioribose-1-phosphate isomerase (337 aa).

Substrate is bound by residues 47–49 (RGA), arginine 81, and glutamine 184. The active-site Proton donor is the aspartate 225. Residue 235-236 (NK) participates in substrate binding.

The protein belongs to the eIF-2B alpha/beta/delta subunits family. MtnA subfamily.

The catalysed reaction is 5-(methylsulfanyl)-alpha-D-ribose 1-phosphate = 5-(methylsulfanyl)-D-ribulose 1-phosphate. Its pathway is amino-acid biosynthesis; L-methionine biosynthesis via salvage pathway; L-methionine from S-methyl-5-thio-alpha-D-ribose 1-phosphate: step 1/6. Functionally, catalyzes the interconversion of methylthioribose-1-phosphate (MTR-1-P) into methylthioribulose-1-phosphate (MTRu-1-P). The sequence is that of Methylthioribose-1-phosphate isomerase from Synechococcus sp. (strain CC9605).